The following is a 245-amino-acid chain: Polynucleotide 3'-phosphatase (245 aa).

The protein belongs to the DNA 3' phosphatase family.

The protein localises to the nucleus. The enzyme catalyses a 3'end (2'-deoxyribonucleotide 3'-phosphate)-DNA + H2O = a 3'-end 2'-deoxyribonucleotide-DNA + phosphate. Its function is as follows. Dephosphorylate DNA's 3'-phosphate termini. Has a role in the repair of breaks in single-stranded DNA. The sequence is that of Polynucleotide 3'-phosphatase (TPP1) from Saccharomyces mikatae (Yeast).